The primary structure comprises 248 residues: DNA repair protein RecO (248 aa).

The protein belongs to the RecO family.

In terms of biological role, involved in DNA repair and RecF pathway recombination. This Bradyrhizobium sp. (strain BTAi1 / ATCC BAA-1182) protein is DNA repair protein RecO.